The sequence spans 299 residues: UDP-N-acetylenolpyruvoylglucosamine reductase (299 aa).

An FAD-binding PCMH-type domain is found at K28–G193. R172 is an active-site residue. S222 functions as the Proton donor in the catalytic mechanism. E292 is a catalytic residue.

FAD serves as cofactor.

The protein localises to the cytoplasm. The catalysed reaction is UDP-N-acetyl-alpha-D-muramate + NADP(+) = UDP-N-acetyl-3-O-(1-carboxyvinyl)-alpha-D-glucosamine + NADPH + H(+). Its pathway is cell wall biogenesis; peptidoglycan biosynthesis. In terms of biological role, cell wall formation. The sequence is that of UDP-N-acetylenolpyruvoylglucosamine reductase from Lactococcus lactis subsp. cremoris (strain MG1363).